Reading from the N-terminus, the 299-residue chain is Virginiamycin B lyase (299 aa).

H229 is a binding site for substrate. E269 contributes to the Mg(2+) binding site. H271 functions as the Proton acceptor in the catalytic mechanism. Residue E286 coordinates Mg(2+).

Belongs to the Vgb family. As to quaternary structure, monomer. It depends on Mg(2+) as a cofactor.

Its function is as follows. Inactivates the type B streptogramin antibiotics by linearizing the lactone ring at the ester linkage, generating a free phenylglycine carboxylate and converting the threonyl moiety into 2-amino-butenoic acid. This is Virginiamycin B lyase from Bordetella bronchiseptica (strain ATCC BAA-588 / NCTC 13252 / RB50) (Alcaligenes bronchisepticus).